Consider the following 29-residue polypeptide: Glucagon (29 aa).

Belongs to the glucagon family.

It is found in the secreted. Its function is as follows. Promotes hydrolysis of glycogen and lipids, and raises the blood sugar level. The sequence is that of Glucagon (gcg) from Torpedo marmorata (Marbled electric ray).